The sequence spans 410 residues: FAS1 domain-containing protein CaO19.3004 (410 aa).

A signal peptide spans 1–18 (MKLSKLLQLAVFSSLVTS). Basic and acidic residues-rich tracts occupy residues 64-73 (NAKFKRDPKN) and 83-96 (GSAE…REPK). Residues 64 to 98 (NAKFKRDPKNVIDPASLKEGSAEEEQKDKREPKNL) are disordered. Residues 247-407 (NNLLQSILPQ…GFVLIINDSL (161 aa)) enclose the FAS1 domain.

It is found in the vacuole. This chain is FAS1 domain-containing protein CaO19.3004, found in Candida albicans (strain SC5314 / ATCC MYA-2876) (Yeast).